Here is a 284-residue protein sequence, read N- to C-terminus: Bifunctional protein FolD (284 aa).

Residues 166 to 168 (GRS) and serine 191 contribute to the NADP(+) site.

This sequence belongs to the tetrahydrofolate dehydrogenase/cyclohydrolase family. Homodimer.

It catalyses the reaction (6R)-5,10-methylene-5,6,7,8-tetrahydrofolate + NADP(+) = (6R)-5,10-methenyltetrahydrofolate + NADPH. The enzyme catalyses (6R)-5,10-methenyltetrahydrofolate + H2O = (6R)-10-formyltetrahydrofolate + H(+). Its pathway is one-carbon metabolism; tetrahydrofolate interconversion. Functionally, catalyzes the oxidation of 5,10-methylenetetrahydrofolate to 5,10-methenyltetrahydrofolate and then the hydrolysis of 5,10-methenyltetrahydrofolate to 10-formyltetrahydrofolate. This is Bifunctional protein FolD from Leptospira borgpetersenii serovar Hardjo-bovis (strain JB197).